We begin with the raw amino-acid sequence, 327 residues long: Lipoyl synthase (327 aa).

[4Fe-4S] cluster is bound by residues cysteine 72, cysteine 77, cysteine 83, cysteine 98, cysteine 102, cysteine 105, and serine 313. The Radical SAM core domain occupies 83 to 302; that stretch reads CWSHGTATIM…RRVGLEKGFL (220 aa).

This sequence belongs to the radical SAM superfamily. Lipoyl synthase family. The cofactor is [4Fe-4S] cluster.

It is found in the cytoplasm. The catalysed reaction is [[Fe-S] cluster scaffold protein carrying a second [4Fe-4S](2+) cluster] + N(6)-octanoyl-L-lysyl-[protein] + 2 oxidized [2Fe-2S]-[ferredoxin] + 2 S-adenosyl-L-methionine + 4 H(+) = [[Fe-S] cluster scaffold protein] + N(6)-[(R)-dihydrolipoyl]-L-lysyl-[protein] + 4 Fe(3+) + 2 hydrogen sulfide + 2 5'-deoxyadenosine + 2 L-methionine + 2 reduced [2Fe-2S]-[ferredoxin]. It participates in protein modification; protein lipoylation via endogenous pathway; protein N(6)-(lipoyl)lysine from octanoyl-[acyl-carrier-protein]: step 2/2. Functionally, catalyzes the radical-mediated insertion of two sulfur atoms into the C-6 and C-8 positions of the octanoyl moiety bound to the lipoyl domains of lipoate-dependent enzymes, thereby converting the octanoylated domains into lipoylated derivatives. The polypeptide is Lipoyl synthase (Francisella philomiragia subsp. philomiragia (strain ATCC 25017 / CCUG 19701 / FSC 153 / O#319-036)).